We begin with the raw amino-acid sequence, 580 residues long: DNA mismatch repair protein MutL (580 aa).

This sequence belongs to the DNA mismatch repair MutL/HexB family.

In terms of biological role, this protein is involved in the repair of mismatches in DNA. It is required for dam-dependent methyl-directed DNA mismatch repair. May act as a 'molecular matchmaker', a protein that promotes the formation of a stable complex between two or more DNA-binding proteins in an ATP-dependent manner without itself being part of a final effector complex. The sequence is that of DNA mismatch repair protein MutL from Chlamydia felis (strain Fe/C-56) (Chlamydophila felis).